We begin with the raw amino-acid sequence, 308 residues long: UDP-N-acetylenolpyruvoylglucosamine reductase (308 aa).

In terms of domain architecture, FAD-binding PCMH-type spans Arg24–Gly187. The active site involves Arg167. Residues Gln199–Ala230 form a disordered region. Over residues Leu200–Ser213 the composition is skewed to basic and acidic residues. The span at Ala214–Gly228 shows a compositional bias: polar residues. The Proton donor role is filled by Ser216. Residue Glu298 is part of the active site.

This sequence belongs to the MurB family. FAD is required as a cofactor.

The protein resides in the cytoplasm. It carries out the reaction UDP-N-acetyl-alpha-D-muramate + NADP(+) = UDP-N-acetyl-3-O-(1-carboxyvinyl)-alpha-D-glucosamine + NADPH + H(+). Its pathway is cell wall biogenesis; peptidoglycan biosynthesis. Its function is as follows. Cell wall formation. This is UDP-N-acetylenolpyruvoylglucosamine reductase from Ruegeria pomeroyi (strain ATCC 700808 / DSM 15171 / DSS-3) (Silicibacter pomeroyi).